Reading from the N-terminus, the 457-residue chain is tRNA-2-methylthio-N(6)-dimethylallyladenosine synthase (457 aa).

One can recognise an MTTase N-terminal domain in the interval 3–120 (KKVYVKTFGC…LPQMIDQRRA (118 aa)). [4Fe-4S] cluster-binding residues include Cys12, Cys49, Cys83, Cys157, Cys161, and Cys164. Positions 143-377 (RVEGPSAFVS…QATIEENVAR (235 aa)) constitute a Radical SAM core domain. The 68-residue stretch at 380–447 (RSMVGKVERI…PHSLRGELLL (68 aa)) folds into the TRAM domain.

This sequence belongs to the methylthiotransferase family. MiaB subfamily. As to quaternary structure, monomer. [4Fe-4S] cluster is required as a cofactor.

The protein localises to the cytoplasm. It carries out the reaction N(6)-dimethylallyladenosine(37) in tRNA + (sulfur carrier)-SH + AH2 + 2 S-adenosyl-L-methionine = 2-methylsulfanyl-N(6)-dimethylallyladenosine(37) in tRNA + (sulfur carrier)-H + 5'-deoxyadenosine + L-methionine + A + S-adenosyl-L-homocysteine + 2 H(+). In terms of biological role, catalyzes the methylthiolation of N6-(dimethylallyl)adenosine (i(6)A), leading to the formation of 2-methylthio-N6-(dimethylallyl)adenosine (ms(2)i(6)A) at position 37 in tRNAs that read codons beginning with uridine. The sequence is that of tRNA-2-methylthio-N(6)-dimethylallyladenosine synthase from Burkholderia ambifaria (strain ATCC BAA-244 / DSM 16087 / CCUG 44356 / LMG 19182 / AMMD) (Burkholderia cepacia (strain AMMD)).